The primary structure comprises 471 residues: Ubiquitin carboxyl-terminal hydrolase 8 (471 aa).

The Zn(2+) site is built by Cys-4, His-6, Cys-46, Cys-49, Cys-60, Cys-63, Cys-68, His-73, His-77, His-83, Cys-96, and Cys-99. The UBP-type; degenerate zinc-finger motif lies at 22–122 (KTCNAARYIL…ILAKYWDDVC (101 aa)). Positions 137-468 (SGLINMGSTC…QAYLLFYTIR (332 aa)) constitute a USP domain. Cys-146 serves as the catalytic Nucleophile. 12 residues coordinate Zn(2+): His-170, Cys-174, Cys-182, Cys-185, His-250, Cys-271, Cys-273, His-276, Cys-289, Cys-292, Cys-336, and Cys-339. Catalysis depends on His-427, which acts as the Proton acceptor.

It belongs to the peptidase C19 family. UBP8 subfamily. In terms of assembly, component of the 1.8 MDa SAGA (Spt-Ada-Gcn5 acetyltransferase) complex, which is composed of 19 subunits TRA1, SPT7, TAF5, NGG1/ADA3, SGF73, SPT20/ADA5, SPT8, TAF12, TAF6, HFI1/ADA1, UBP8, GCN5, ADA2, SPT3, SGF29, TAF10, TAF9, SGF11 and SUS1. The SAGA complex is composed of 4 modules, namely the HAT (histone acetyltransferase) module (GCN5, ADA2, NGG1/ADA3 and SGF29), the DUB (deubiquitinating) module (UBP8, SGF11, SGF73 and SUS1), the core or TAF (TBP-associated factor) module (TAF5, TAF6, TAF9, TAF10 and TAF12), and the Tra1 or SPT (Suppressor of Ty) module (TRA1, HFI1/ADA1, SPT3, SPT7, SPT8 and SPT20/ADA5). The Tra1/SPT module binds activators, the core module recruits TBP (TATA-binding protein), the HAT module contains the histone H3 acetyltransferase GCN5, and the DUB module comprises the histone H2B deubiquitinase UBP8. Also identified in an altered form of SAGA, named SALSA (SAGA altered, Spt8 absent) or SLIK (SAGA-like) complex, which contains a C-terminal truncated form of SPT7 and is missing SPT8. However, it has been shown that the SAGA and SAGA-like SALSA/SLIK transcriptional coactivators are structurally and biochemically equivalent.

Its subcellular location is the nucleus. It carries out the reaction Thiol-dependent hydrolysis of ester, thioester, amide, peptide and isopeptide bonds formed by the C-terminal Gly of ubiquitin (a 76-residue protein attached to proteins as an intracellular targeting signal).. Its function is as follows. Histone deubiquitinating enzyme component of the transcription coactivator SAGA complex. SAGA acts as a general cofactor required for essentially all RNA polymerase II transcription. At the promoters, SAGA is required for transcription pre-initiation complex (PIC) recruitment. It influences RNA polymerase II transcriptional activity through different activities such as TBP interaction (via core/TAF module) and promoter selectivity, interaction with transcription activators (via Tra1/SPT module), and chromatin modification through histone acetylation (via HAT module) and deubiquitination (via DUB module). SAGA preferentially acetylates histones H3 (to form H3K9ac, H3K14ac, H3K18ac and H3K23ac) and H2B and deubiquitinates histone H2B. SAGA interacts with DNA via upstream activating sequences (UASs). Also identified in a modified version of SAGA named SALSA or SLIK. The cleavage of SPT7 and the absence of the SPT8 subunit in SLIK neither drive any major conformational differences in its structure compared with SAGA, nor significantly affect HAT, DUB, or DNA-binding activities. Within the DUB module, the correctly positioned zinc finger domains of SGF11 and SGF73 are both required to fully activate the ubiquitin hydrolase UBP8. The DUB module is also linked to the splicing efficiency of many transcripts. In Saccharomyces cerevisiae (strain ATCC 204508 / S288c) (Baker's yeast), this protein is Ubiquitin carboxyl-terminal hydrolase 8 (UBP8).